The chain runs to 67 residues: KDGYLVEVTGCKKSCYKLGENKFCNRECKMKHRGGSYGYCYFFGCYCEGLAESTPTWPLPNKSCGKK.

Residues 1–65 (KDGYLVEVTG…TWPLPNKSCG (65 aa)) form the LCN-type CS-alpha/beta domain. Cystine bridges form between C11/C64, C15/C40, C24/C45, and C28/C47. C64 carries the cysteine amide modification. The propeptide occupies 65 to 67 (GKK).

Belongs to the long (4 C-C) scorpion toxin superfamily. Sodium channel inhibitor family. Beta subfamily. Expressed by the venom gland.

The protein resides in the secreted. In terms of biological role, beta toxins bind voltage-independently at site-4 of sodium channels (Nav) and shift the voltage of activation toward more negative potentials thereby affecting sodium channel activation and promoting spontaneous and repetitive firing. The protein is Neurotoxin Cex10 of Centruroides exilicauda (Bark scorpion).